Consider the following 449-residue polypeptide: Phosphoglucosamine mutase (449 aa).

The active-site Phosphoserine intermediate is serine 100. Mg(2+)-binding residues include serine 100, aspartate 241, aspartate 243, and aspartate 245. Serine 100 is subject to Phosphoserine.

It belongs to the phosphohexose mutase family. It depends on Mg(2+) as a cofactor. Post-translationally, activated by phosphorylation.

The catalysed reaction is alpha-D-glucosamine 1-phosphate = D-glucosamine 6-phosphate. In terms of biological role, catalyzes the conversion of glucosamine-6-phosphate to glucosamine-1-phosphate. The protein is Phosphoglucosamine mutase of Clostridium botulinum (strain Langeland / NCTC 10281 / Type F).